Consider the following 198-residue polypeptide: Holliday junction resolvase RecU (198 aa).

Mg(2+)-binding residues include T83, D85, E98, and Q117.

This sequence belongs to the RecU family. Mg(2+) serves as cofactor.

The protein resides in the cytoplasm. It catalyses the reaction Endonucleolytic cleavage at a junction such as a reciprocal single-stranded crossover between two homologous DNA duplexes (Holliday junction).. Its function is as follows. Endonuclease that resolves Holliday junction intermediates in genetic recombination. Cleaves mobile four-strand junctions by introducing symmetrical nicks in paired strands. Promotes annealing of linear ssDNA with homologous dsDNA. Required for DNA repair, homologous recombination and chromosome segregation. This is Holliday junction resolvase RecU from Streptococcus thermophilus (strain CNRZ 1066).